Here is a 1345-residue protein sequence, read N- to C-terminus: DNA-directed RNA polymerase subunit beta (1345 aa).

Belongs to the RNA polymerase beta chain family. As to quaternary structure, the RNAP catalytic core consists of 2 alpha, 1 beta, 1 beta' and 1 omega subunit. When a sigma factor is associated with the core the holoenzyme is formed, which can initiate transcription.

The catalysed reaction is RNA(n) + a ribonucleoside 5'-triphosphate = RNA(n+1) + diphosphate. Its function is as follows. DNA-dependent RNA polymerase catalyzes the transcription of DNA into RNA using the four ribonucleoside triphosphates as substrates. The sequence is that of DNA-directed RNA polymerase subunit beta from Shewanella sp. (strain ANA-3).